We begin with the raw amino-acid sequence, 95 residues long: Small ribosomal subunit protein bS16 (95 aa).

The protein belongs to the bacterial ribosomal protein bS16 family.

This Thermosipho melanesiensis (strain DSM 12029 / CIP 104789 / BI429) protein is Small ribosomal subunit protein bS16.